Here is a 363-residue protein sequence, read N- to C-terminus: Cobalt-precorrin-5B C(1)-methyltransferase (363 aa).

Belongs to the CbiD family.

The enzyme catalyses Co-precorrin-5B + S-adenosyl-L-methionine = Co-precorrin-6A + S-adenosyl-L-homocysteine. It functions in the pathway cofactor biosynthesis; adenosylcobalamin biosynthesis; cob(II)yrinate a,c-diamide from sirohydrochlorin (anaerobic route): step 6/10. Functionally, catalyzes the methylation of C-1 in cobalt-precorrin-5B to form cobalt-precorrin-6A. This chain is Cobalt-precorrin-5B C(1)-methyltransferase, found in Treponema denticola (strain ATCC 35405 / DSM 14222 / CIP 103919 / JCM 8153 / KCTC 15104).